Reading from the N-terminus, the 1022-residue chain is GPI ethanolamine phosphate transferase 1 (1022 aa).

The Cytoplasmic portion of the chain corresponds to 1–6 (MARVGR). The chain crosses the membrane as a helical span at residues 7–27 (VGFLTLAVVFHLMYAYSIFDI). The Lumenal portion of the chain corresponds to 28–466 (YFVSPIVSGM…LQTYDWLFLR (439 aa)). Asn-148 and Asn-433 each carry an N-linked (GlcNAc...) asparagine glycan. Residues 467–487 (TIVSLGYLGWIAYALTTVIDL) traverse the membrane as a helical segment. Residues 488-498 (HVLHGKSESNR) lie on the Cytoplasmic side of the membrane. The helical transmembrane segment at 499–519 (TTFSIMFFSSILVALFSVLLY) threads the bilayer. Residues 520–560 (QGSSWRYYLYALFPIFFWEEVFARRKALLAGREILLGHVHS) lie on the Lumenal side of the membrane. The helical transmembrane segment at 561 to 581 (VSGYFAFAIQLLLYVGVLEAL) threads the bilayer. The Cytoplasmic portion of the chain corresponds to 582–589 (VQSYFHRD). A helical transmembrane segment spans residues 590 to 610 (IFTVCFILGGFWPITYGTKFL). Over 611-614 (GQHK) the chain is Lumenal. The helical transmembrane segment at 615 to 635 (LLSASWALGCFLMSIFTLLPA) threads the bilayer. The Cytoplasmic segment spans residues 636 to 640 (NKVED). The chain crosses the membrane as a helical span at residues 641–661 (MMMISCGSLLMFLTGLLYLIF). The Lumenal portion of the chain corresponds to 662 to 685 (ERSILGQKRSSDPNSVVSSCGSRT). The chain crosses the membrane as a helical span at residues 686 to 706 (IMGAQVGMILLALIVTRSSVA). The Cytoplasmic portion of the chain corresponds to 707-713 (SLQAKQG). A helical transmembrane segment spans residues 714–734 (LPLGNQVLGWAILVSSLLLPF). At 735 to 749 (LHRLYPNSHYLHRLM) the chain is on the lumenal side. Helical transmembrane passes span 750 to 770 (VIFLTFSPIFIILTISYEGLF) and 771 to 791 (YFVFCMTLLAWVRLEQAIYIH). Residues 792–837 (TTAPTREQDHSVANGSLPAKKPSPGNTVVVEGQPYRYRTLSVSDAR) lie on the Lumenal side of the membrane. The N-linked (GlcNAc...) asparagine glycan is linked to Asn-805. The chain crosses the membrane as a helical span at residues 838-858 (VALFFFFLLQSGFFSTGNIAS). The Cytoplasmic segment spans residues 859–880 (VSSFSLDSVYRLIPIFNPFAQG). A helical membrane pass occupies residues 881–901 (ALLILKLLIPFAIISANLGIL). The Lumenal segment spans residues 902–910 (NHRLEVAPS). The chain crosses the membrane as a helical span at residues 911 to 931 (ALFMVVMSISDVMTLNFFYMV). The Cytoplasmic portion of the chain corresponds to 932–947 (RDEGSWLEIGTTISHF). A helical membrane pass occupies residues 948 to 968 (CIASFLCTFVAVLEFLSELFI). At 969–1022 (SGVDFGHPATTVGSAVAKAVNGSVACGHSPDSDISGEDSTSVGITAKADPDARS) the chain is on the lumenal side. Residue Asn-989 is glycosylated (N-linked (GlcNAc...) asparagine). The tract at residues 998 to 1022 (PDSDISGEDSTSVGITAKADPDARS) is disordered.

Belongs to the PIGG/PIGN/PIGO family. PIGN subfamily.

It is found in the endoplasmic reticulum membrane. It participates in glycolipid biosynthesis; glycosylphosphatidylinositol-anchor biosynthesis. Its function is as follows. Ethanolamine phosphate transferase involved in glycosylphosphatidylinositol-anchor biosynthesis. Transfers ethanolamine phosphate to the first alpha-1,4-linked mannose of the glycosylphosphatidylinositol precursor of GPI-anchor. This chain is GPI ethanolamine phosphate transferase 1 (mcd4), found in Aspergillus oryzae (strain ATCC 42149 / RIB 40) (Yellow koji mold).